Reading from the N-terminus, the 992-residue chain is MSPAMANPRVRKFNPIAFTPLPVTFITTIVYLAVLILVLVTYLVVPPAPTLEMSPKGVNLTEAWRDLQHLTEGFHPYNSRRNDDVHAWLLHRIEAIVRESASADGGPEVFVFDDNLSNLTYSNGGVSKSPIVGVYFESTNIIVYIRGSEDDPQNWWEWSNGKPKGKGGVLVNAHYDSVSTGYGATDDGMGVVSLLQLLRYFTTAGNKPRKGLVLLFNNGEEDYLNGARVYSQHAMSNFTHTFLNLEGAGAGGRACLFRSTDTEVTRFYKNAKHPFGSVLAGDGFKLGLIRSQTDYVVFNGVLGLRGLDVSFIAPRSRYHTDQDDARHTNVDSLWHMLSVAIGTTEGLVSYTGTDFDSKTTDQDKVNSGDGTLGIWFDIFGSAFAVFRLHTLFALSVTLLVIGPLVLFITSIALSKTDRMYLFSMSKSLGGASETVSLRGLRGLFRTPIILTVTTVIPIGLAYLLEKINPYIVHSSQFAVWSMMLSVWIFVAWFLARVADFFRPSALHRAYSYTWIFIVTWIMLVISTVYANQKGIAAGYFTFFYFAAVFLATWVSYLELFSLPRKGYYARQASRRQKRRSSSLSSRLLTPSADELPSDIGPNGAENVGDPDETDPTESTSLLRGQRTTFANYRTGGDDWVTEYTAEDEHVREASIFGHEQSWSWTLPRWTWILQLLLLAPIVIILVGQVGLLLTTAMSQIGSDGVSTFIVYLACALFSTLLFAPLLPFIHRFTYHVPTFLLLIFIGTLIYNLVAFPFSPANRLKIFFIQEVNLDDGTNKVSLTGIQPYLTDTINAIPSAAGQTANCTQGPFGSLVRCSWSGLPPRVVKEDPGNDQTMGPYTWISYNITRTVGKNEARIKVSGRNTRACKLKFDNPVADYRISGSAVDHRLPHTSRQGVAEIRLWSRTWENTWVVDVDWHSNPVNPGESKDGDEKQDVSKNELSGKVICLWSDNNESGVIPALDEVRLYAPAWVAISKSADGLVEASHDFIIQ.

Residues 1-24 are Cytoplasmic-facing; sequence MSPAMANPRVRKFNPIAFTPLPVT. The chain crosses the membrane as a helical span at residues 25–45; that stretch reads FITTIVYLAVLILVLVTYLVV. Residues 46–390 lie on the Vacuolar side of the membrane; sequence PPAPTLEMSP…SAFAVFRLHT (345 aa). Asparagine 59, asparagine 115, and asparagine 118 each carry an N-linked (GlcNAc...) asparagine glycan. The Zn(2+) site is built by histidine 174 and aspartate 186. Glutamate 220 functions as the Proton acceptor in the catalytic mechanism. A Zn(2+)-binding site is contributed by glutamate 221. A glycan (N-linked (GlcNAc...) asparagine) is linked at asparagine 237. Residues glutamate 246 and histidine 319 each coordinate Zn(2+). A helical transmembrane segment spans residues 391–411; the sequence is LFALSVTLLVIGPLVLFITSI. The Cytoplasmic segment spans residues 412 to 446; it reads ALSKTDRMYLFSMSKSLGGASETVSLRGLRGLFRT. The chain crosses the membrane as a helical span at residues 447-467; sequence PIILTVTTVIPIGLAYLLEKI. Topologically, residues 468–474 are vacuolar; the sequence is NPYIVHS. A helical membrane pass occupies residues 475–495; the sequence is SQFAVWSMMLSVWIFVAWFLA. The Cytoplasmic segment spans residues 496–508; it reads RVADFFRPSALHR. A helical membrane pass occupies residues 509–529; the sequence is AYSYTWIFIVTWIMLVISTVY. The Vacuolar segment spans residues 530 to 533; that stretch reads ANQK. Residues 534–554 traverse the membrane as a helical segment; it reads GIAAGYFTFFYFAAVFLATWV. Residues 555–671 are Cytoplasmic-facing; sequence SYLELFSLPR…WSWTLPRWTW (117 aa). Residues 579–620 form a disordered region; that stretch reads RSSSLSSRLLTPSADELPSDIGPNGAENVGDPDETDPTESTS. Residues 672–692 form a helical membrane-spanning segment; it reads ILQLLLLAPIVIILVGQVGLL. Residues 693–708 are Vacuolar-facing; that stretch reads LTTAMSQIGSDGVSTF. Residues 709-729 traverse the membrane as a helical segment; that stretch reads IVYLACALFSTLLFAPLLPFI. Topologically, residues 730-736 are cytoplasmic; sequence HRFTYHV. The chain crosses the membrane as a helical span at residues 737 to 757; the sequence is PTFLLLIFIGTLIYNLVAFPF. The Vacuolar portion of the chain corresponds to 758 to 992; sequence SPANRLKIFF…VEASHDFIIQ (235 aa). Asparagine 805, asparagine 846, and asparagine 954 each carry an N-linked (GlcNAc...) asparagine glycan.

Belongs to the peptidase M28 family. Zn(2+) serves as cofactor.

The protein localises to the vacuole membrane. Its function is as follows. May be involved in vacuolar sorting and osmoregulation. The sequence is that of Vacuolar membrane protease from Paracoccidioides brasiliensis (strain Pb03).